We begin with the raw amino-acid sequence, 443 residues long: MSKTLYQKIYDSHVVYEDKNSTSILYIDLHLLHEVTSPQAFDSLRNKQRTVRQSKKTFATMDHNVSTKIQNISASGSMAQKQMEQLIQNCQEFNIPLYDINNPHQGIVHVIAPEKGMTLPGMTIVCGDSHTSTHGAFGALAFGIGTSEVEHVLATQTLKQKRFKNMKIEIIGKIPRFVTAKDIILFIIGKLGSSSGTGHVIEFCGDVIRNMSMEERMTICNMAIEMGAKSGLIAPDEITYSYLKNKIYSPSGLFWQKSLDYWKLLKSDHNAHYDKCFTVNISNLAPQITWGTNLDQVISIDEKIPDFNDVNSTIKKDSAKSACEYMGLKSNTYLTNISIDKVFIGSCTNARIEDLRSAAGILKNKKIAKHVQAIVVPGSGSVKRQAEREGLDKIFIDSGFEWRLPGCSMCLGMNKDRLNFGERCASXSNRNFEGRQGRGGRTH.

Cys-347, Cys-407, and Cys-410 together coordinate [4Fe-4S] cluster.

Belongs to the aconitase/IPM isomerase family. LeuC type 1 subfamily. Heterodimer of LeuC and LeuD. [4Fe-4S] cluster is required as a cofactor.

It catalyses the reaction (2R,3S)-3-isopropylmalate = (2S)-2-isopropylmalate. The protein operates within amino-acid biosynthesis; L-leucine biosynthesis; L-leucine from 3-methyl-2-oxobutanoate: step 2/4. Functionally, catalyzes the isomerization between 2-isopropylmalate and 3-isopropylmalate, via the formation of 2-isopropylmaleate. This is 3-isopropylmalate dehydratase large subunit from Buchnera aphidicola subsp. Uroleucon sonchi.